The chain runs to 491 residues: Protein nucleotidyltransferase YdiU (491 aa).

8 residues coordinate ATP: Gly-88, Gly-90, Arg-91, Lys-111, Asp-123, Gly-124, Arg-174, and Arg-181. The Proton acceptor role is filled by Asp-250. Asn-251 and Asp-260 together coordinate Mg(2+). Asp-260 provides a ligand contact to ATP.

It belongs to the SELO family. Mg(2+) is required as a cofactor. Mn(2+) serves as cofactor.

The catalysed reaction is L-seryl-[protein] + ATP = 3-O-(5'-adenylyl)-L-seryl-[protein] + diphosphate. The enzyme catalyses L-threonyl-[protein] + ATP = 3-O-(5'-adenylyl)-L-threonyl-[protein] + diphosphate. It catalyses the reaction L-tyrosyl-[protein] + ATP = O-(5'-adenylyl)-L-tyrosyl-[protein] + diphosphate. It carries out the reaction L-histidyl-[protein] + UTP = N(tele)-(5'-uridylyl)-L-histidyl-[protein] + diphosphate. The catalysed reaction is L-seryl-[protein] + UTP = O-(5'-uridylyl)-L-seryl-[protein] + diphosphate. The enzyme catalyses L-tyrosyl-[protein] + UTP = O-(5'-uridylyl)-L-tyrosyl-[protein] + diphosphate. Its function is as follows. Nucleotidyltransferase involved in the post-translational modification of proteins. It can catalyze the addition of adenosine monophosphate (AMP) or uridine monophosphate (UMP) to a protein, resulting in modifications known as AMPylation and UMPylation. The polypeptide is Protein nucleotidyltransferase YdiU (Rhodopseudomonas palustris (strain BisB18)).